A 344-amino-acid chain; its full sequence is Dihydroorotase (344 aa).

Zn(2+)-binding residues include His-14 and His-16. Substrate is bound by residues 16 to 18 (HLR) and Asn-42. Residues Lys-99, His-136, and His-174 each contribute to the Zn(2+) site. Lys-99 carries the post-translational modification N6-carboxylysine. His-136 is a binding site for substrate. Substrate is bound at residue Leu-219. Position 247 (Asp-247) interacts with Zn(2+). Asp-247 is a catalytic residue. 2 residues coordinate substrate: His-251 and Ala-263.

This sequence belongs to the metallo-dependent hydrolases superfamily. DHOase family. Class II DHOase subfamily. In terms of assembly, homodimer. Zn(2+) is required as a cofactor.

The enzyme catalyses (S)-dihydroorotate + H2O = N-carbamoyl-L-aspartate + H(+). It participates in pyrimidine metabolism; UMP biosynthesis via de novo pathway; (S)-dihydroorotate from bicarbonate: step 3/3. In terms of biological role, catalyzes the reversible cyclization of carbamoyl aspartate to dihydroorotate. The protein is Dihydroorotase of Teredinibacter turnerae (strain ATCC 39867 / T7901).